The sequence spans 483 residues: Glutamyl-tRNA(Gln) amidotransferase subunit A (483 aa).

Residues K76 and S151 each act as charge relay system in the active site. Catalysis depends on S175, which acts as the Acyl-ester intermediate.

The protein belongs to the amidase family. GatA subfamily. As to quaternary structure, heterotrimer of A, B and C subunits.

The catalysed reaction is L-glutamyl-tRNA(Gln) + L-glutamine + ATP + H2O = L-glutaminyl-tRNA(Gln) + L-glutamate + ADP + phosphate + H(+). In terms of biological role, allows the formation of correctly charged Gln-tRNA(Gln) through the transamidation of misacylated Glu-tRNA(Gln) in organisms which lack glutaminyl-tRNA synthetase. The reaction takes place in the presence of glutamine and ATP through an activated gamma-phospho-Glu-tRNA(Gln). The protein is Glutamyl-tRNA(Gln) amidotransferase subunit A of Pseudomonas syringae pv. tomato (strain ATCC BAA-871 / DC3000).